Here is a 46-residue protein sequence, read N- to C-terminus: Large ribosomal subunit protein bL36B (46 aa).

Belongs to the bacterial ribosomal protein bL36 family.

The sequence is that of Large ribosomal subunit protein bL36B from Enterobacter sp. (strain 638).